The chain runs to 477 residues: Pentatricopeptide repeat-containing protein At4g14170 (477 aa).

PPR repeat units lie at residues 65 to 96, 97 to 131, 133 to 167, 168 to 198, 199 to 233, 234 to 264, 269 to 299, 300 to 334, 335 to 369, and 370 to 400; these read NVVL…MPYR, NIFS…SCVR, DDFT…GFSS, SLFV…MPVR, DSVL…GFAL, DSVV…CIRR, GLNL…MSRR, DVIS…GIEP, NAVT…NIVP, and ELKH…MPVK. The segment at 405–477 is type E motif; degenerate; it reads VMGAVLSGCK…ISKVPGCSSI (73 aa).

It belongs to the PPR family. PCMP-E subfamily.

This chain is Pentatricopeptide repeat-containing protein At4g14170 (PCMP-E17), found in Arabidopsis thaliana (Mouse-ear cress).